A 441-amino-acid chain; its full sequence is Arginine biosynthesis bifunctional protein ArgJ, mitochondrial (441 aa).

T177, K203, T214, E303, N436, and S441 together coordinate substrate. The active-site Nucleophile is the T214.

Belongs to the ArgJ family. Heterodimer of an alpha and a beta chain. Post-translationally, the alpha and beta chains are autoproteolytically processed from a single precursor protein within the mitochondrion.

The protein resides in the mitochondrion matrix. The catalysed reaction is N(2)-acetyl-L-ornithine + L-glutamate = N-acetyl-L-glutamate + L-ornithine. The enzyme catalyses L-glutamate + acetyl-CoA = N-acetyl-L-glutamate + CoA + H(+). The protein operates within amino-acid biosynthesis; L-arginine biosynthesis; L-ornithine and N-acetyl-L-glutamate from L-glutamate and N(2)-acetyl-L-ornithine (cyclic): step 1/1. It participates in amino-acid biosynthesis; L-arginine biosynthesis; N(2)-acetyl-L-ornithine from L-glutamate: step 1/4. Its function is as follows. Catalyzes two activities which are involved in the cyclic version of arginine biosynthesis: the synthesis of acetylglutamate from glutamate and acetyl-CoA, and of ornithine by transacetylation between acetylornithine and glutamate. In Debaryomyces hansenii (strain ATCC 36239 / CBS 767 / BCRC 21394 / JCM 1990 / NBRC 0083 / IGC 2968) (Yeast), this protein is Arginine biosynthesis bifunctional protein ArgJ, mitochondrial.